The chain runs to 340 residues: Ribose-phosphate pyrophosphokinase (340 aa).

ATP contacts are provided by residues 47-49 (NGE) and 106-107 (RQ). Residues histidine 140 and aspartate 182 each coordinate Mg(2+). Lysine 206 is an active-site residue. D-ribose 5-phosphate-binding positions include arginine 208, aspartate 234, and 238-242 (DTAGT).

This sequence belongs to the ribose-phosphate pyrophosphokinase family. Class I subfamily. In terms of assembly, homohexamer. Mg(2+) is required as a cofactor.

It localises to the cytoplasm. The catalysed reaction is D-ribose 5-phosphate + ATP = 5-phospho-alpha-D-ribose 1-diphosphate + AMP + H(+). Its pathway is metabolic intermediate biosynthesis; 5-phospho-alpha-D-ribose 1-diphosphate biosynthesis; 5-phospho-alpha-D-ribose 1-diphosphate from D-ribose 5-phosphate (route I): step 1/1. Involved in the biosynthesis of the central metabolite phospho-alpha-D-ribosyl-1-pyrophosphate (PRPP) via the transfer of pyrophosphoryl group from ATP to 1-hydroxyl of ribose-5-phosphate (Rib-5-P). This chain is Ribose-phosphate pyrophosphokinase, found in Bifidobacterium longum (strain NCC 2705).